Reading from the N-terminus, the 161-residue chain is Protein-export protein SecB (161 aa).

It belongs to the SecB family. As to quaternary structure, homotetramer, a dimer of dimers. One homotetramer interacts with 1 SecA dimer.

The protein resides in the cytoplasm. Its function is as follows. One of the proteins required for the normal export of preproteins out of the cell cytoplasm. It is a molecular chaperone that binds to a subset of precursor proteins, maintaining them in a translocation-competent state. It also specifically binds to its receptor SecA. This is Protein-export protein SecB from Methylocella silvestris (strain DSM 15510 / CIP 108128 / LMG 27833 / NCIMB 13906 / BL2).